Consider the following 200-residue polypeptide: NADH-quinone oxidoreductase subunit B (200 aa).

Positions 78, 79, 144, and 174 each coordinate [4Fe-4S] cluster.

It belongs to the complex I 20 kDa subunit family. As to quaternary structure, NDH-1 is composed of 14 different subunits. Subunits NuoB, C, D, E, F, and G constitute the peripheral sector of the complex. [4Fe-4S] cluster serves as cofactor.

It is found in the cell membrane. It catalyses the reaction a quinone + NADH + 5 H(+)(in) = a quinol + NAD(+) + 4 H(+)(out). Functionally, NDH-1 shuttles electrons from NADH, via FMN and iron-sulfur (Fe-S) centers, to quinones in the respiratory chain. The immediate electron acceptor for the enzyme in this species is believed to be ubiquinone. Couples the redox reaction to proton translocation (for every two electrons transferred, four hydrogen ions are translocated across the cytoplasmic membrane), and thus conserves the redox energy in a proton gradient. In Dehalococcoides mccartyi (strain ATCC BAA-2266 / KCTC 15142 / 195) (Dehalococcoides ethenogenes (strain 195)), this protein is NADH-quinone oxidoreductase subunit B.